The following is a 712-amino-acid chain: Lactoperoxidase (712 aa).

An N-terminal signal peptide occupies residues 1–26 (MRVLLHLPALLASLILLQAAASTTRA). Residues 27–80 (QTTRTSAISDTVSQAKVQVNKAFLDSRTRLKTAMSSETPTSRQLSEYLKHAKGR) constitute a propeptide that is removed on maturation. N-linked (GlcNAc...) asparagine glycosylation is present at Asn106. Residues Cys132 and Cys145 are joined by a disulfide bond. The N-linked (GlcNAc...) asparagine glycan is linked to Asn212. Asp225 contacts heme b. Residue His226 is the Proton acceptor of the active site. Residue Asp227 coordinates Ca(2+). Intrachain disulfides connect Cys246-Cys256 and Cys250-Cys274. Ca(2+) contacts are provided by Thr301, Phe303, Asp305, and Ser307. A Phosphoserine modification is found at Ser315. Asn322 and Asn358 each carry an N-linked (GlcNAc...) asparagine glycan. Cysteines 354 and 365 form a disulfide. Residues Glu375 and His468 each coordinate heme b. Residue Tyr482 is modified to 3'-nitrotyrosine. 2 disulfide bridges follow: Cys573-Cys630 and Cys671-Cys696.

It belongs to the peroxidase family. XPO subfamily. Ca(2+) is required as a cofactor. The cofactor is heme b. As to expression, mammary gland, milk and salivary gland. Found in bronchial submucosal glands.

The protein resides in the secreted. The protein localises to the cytoplasm. It carries out the reaction 2 a phenolic donor + H2O2 = 2 a phenolic radical donor + 2 H2O. It catalyses the reaction thiocyanate + H2O2 + H(+) = hypothiocyanous acid + H2O. The enzyme catalyses iodide + H2O2 = hypoiodite + H2O. In terms of biological role, heme-containing oxidoreductase which catalyzes the conversion of thiocyanate (SCN(-)) into antimicrobial agent hypothiocyanous acid (OSCN(-)) in the presence of hydrogen peroxide (H2O2). Also involved in the conversion of iodide (I(-)) into hypoiodite (IO(-)) in the presence of H2O2. Responsible for the inactivation of a wide range of micro-organisms and hence, important component of defense mechanism. Shows antibacterial properties against Pseudomonas aeruginosa. The lactoperoxidase-SCN(-)-H2O2 system shows antibacterial properties against Burkholderia cepacia and Haemophilus influenzae in vitro. Present in mammary and salivary gland secretions and may contribute to airway host defense against infection. May contribute to maintaining an appropriate H2O2 cellular level, therefore protecting cells from H2O2-caused injuries and inflammation. This is Lactoperoxidase from Homo sapiens (Human).